A 182-amino-acid polypeptide reads, in one-letter code: Adenylate kinase (182 aa).

Position 12–17 (G12–T17) interacts with ATP. Residues S32–V61 are NMP. AMP contacts are provided by residues T33, R38, E59–V61, G85–R88, and Q92. The LID stretch occupies residues A126 to D132. R127 serves as a coordination point for ATP. AMP contacts are provided by R129 and R140. Residue G168 participates in ATP binding.

This sequence belongs to the adenylate kinase family. In terms of assembly, monomer.

The protein resides in the cytoplasm. It carries out the reaction AMP + ATP = 2 ADP. It functions in the pathway purine metabolism; AMP biosynthesis via salvage pathway; AMP from ADP: step 1/1. Functionally, catalyzes the reversible transfer of the terminal phosphate group between ATP and AMP. Plays an important role in cellular energy homeostasis and in adenine nucleotide metabolism. The polypeptide is Adenylate kinase (Synechococcus sp. (strain RCC307)).